The following is a 627-amino-acid chain: (-)-beta-pinene synthase 1, chloroplastic (627 aa).

A chloroplast-targeting transit peptide spans 1–50; that stretch reads MDLISVLPSTSKSCVCLHKPLSSSTHKLKPFCRTIRILGMPRPRKSVLMA. Positions 378, 382, and 530 each coordinate Mg(2+). The short motif at 378–382 is the DDXXD motif element; sequence DDMYD.

It belongs to the terpene synthase family. Tpsd subfamily. It depends on Mg(2+) as a cofactor. Requires Mn(2+) as cofactor.

The protein localises to the plastid. It localises to the chloroplast. It catalyses the reaction (2E)-geranyl diphosphate = (1S,5S)-beta-pinene + diphosphate. It carries out the reaction (2E)-geranyl diphosphate = (1S,5S)-alpha-pinene + diphosphate. Its pathway is terpene metabolism; oleoresin biosynthesis. The protein operates within secondary metabolite biosynthesis; terpenoid biosynthesis. Functionally, monoterpene synthase (TPS) involved in the biosynthesis of monoterpene natural products included in conifer oleoresin secretions and volatile emissions; these compounds contribute to biotic and abiotic stress defense against herbivores and pathogens. Catalyzes the conversion of (2E)-geranyl diphosphate (GPP) to (-)-beta-pinene and, to a lower extent, to (-)-alpha-pinene. The chain is (-)-beta-pinene synthase 1, chloroplastic from Pinus contorta (Shore pine).